Consider the following 364-residue polypeptide: Chorismate synthase (364 aa).

R47 serves as a coordination point for NADP(+). Residues 125–127, G285, 300–304, and R327 contribute to the FMN site; these read RFS and KPTPS.

Belongs to the chorismate synthase family. As to quaternary structure, homotetramer. FMNH2 is required as a cofactor.

It catalyses the reaction 5-O-(1-carboxyvinyl)-3-phosphoshikimate = chorismate + phosphate. Its pathway is metabolic intermediate biosynthesis; chorismate biosynthesis; chorismate from D-erythrose 4-phosphate and phosphoenolpyruvate: step 7/7. In terms of biological role, catalyzes the anti-1,4-elimination of the C-3 phosphate and the C-6 proR hydrogen from 5-enolpyruvylshikimate-3-phosphate (EPSP) to yield chorismate, which is the branch point compound that serves as the starting substrate for the three terminal pathways of aromatic amino acid biosynthesis. This reaction introduces a second double bond into the aromatic ring system. This chain is Chorismate synthase, found in Dehalococcoides mccartyi (strain ATCC BAA-2266 / KCTC 15142 / 195) (Dehalococcoides ethenogenes (strain 195)).